Consider the following 343-residue polypeptide: Transmembrane protein 120A (343 aa).

Topologically, residues 1-132 (MQPPPPGPLG…KQAKFAYKDE (132 aa)) are cytoplasmic. Lys-130 provides a ligand contact to CoA. A helical membrane pass occupies residues 133-152 (YEKFKLYLTIILILISFTCR). The Extracellular portion of the chain corresponds to 153-158 (FLLNSR). The helical transmembrane segment at 159 to 177 (VTDAAFNFLLVWYYCTLTI) threads the bilayer. Residues 178-190 (RESILINNGSRIK) are Cytoplasmic-facing. Ser-187 and Arg-188 together coordinate CoA. Residues 191 to 209 (GWWVFHHYVSTFLSGVMLT) form a helical membrane-spanning segment. Topologically, residues 210 to 218 (WPDGLMYQK) are extracellular. Residues 219-240 (FRNQFLSFSMYQSFVQFLQYYY) form a helical membrane-spanning segment. Residues Gln-237, Tyr-240, Gln-241, and His-283 each contribute to the CoA site. At 241 to 270 (QSGCLYRLRALGERHTMDLTVEGFQSWMWR) the chain is on the cytoplasmic side. Residues 271 to 294 (GLTFLLPFLFFGHFWQLFNALTLF) form a helical membrane-spanning segment. Over 295–304 (NLAQDPQCKE) the chain is Extracellular. Residues 305–330 (WQVLMCGFPFLLLFLGNFFTTLRVVH) traverse the membrane as a helical segment. Residues 331–343 (HKFHSQRHGSKKD) lie on the Cytoplasmic side of the membrane. Residue Lys-332 coordinates CoA.

Belongs to the TMEM120 family. In terms of assembly, homodimer. Forms heterooligomer with TMEM120B. Interacts with PKD2; TMEM120A inhibits PKD2 channel activity through the physical association of PKD2 with TMEM120A. Interacts (via C-terminal domain) with STING1; regulates the trafficking of STING1 from the ER to the ER-Golgi intermediate compartment to elicit antiviral effects. In terms of tissue distribution, expressed in nociceptors.

The protein resides in the cell membrane. The protein localises to the nucleus inner membrane. It is found in the endoplasmic reticulum. Functionally, multifunctional protein involved in mechanosensation, and plays an essential role in lipid metabolism and adipocyte differentiation. May function as a potential ion channel involved in sensing mechanical stimuli. Mediates the mechanosensitivity of the PKD2-TMEM120A channel complex through direct physical interaction. TMEM120A seems to affect mechanosensation by inhibiting PIEZO2 channels, possibly by altering cellular lipid content. TMEM120A is structurally similar to a lipid-modifying enzyme, ELOVL7, and contains a bound coenzyme A molecule, which suggests it might function as an enzyme in lipid metabolism. Additionnaly, implicated in innate immune response against Zika virus. Acts as a key activator of the antiviral signaling involving STING1. This chain is Transmembrane protein 120A, found in Homo sapiens (Human).